Consider the following 1154-residue polypeptide: MPGGGPEMDDYMETLKDEEDALWENVECNRHMLSRYINPAKLTPYLRQCKVIDEQDEDEVLNAPMLPSKINRAGRLLDILHTKGQRGYVVFLESLEFYYPELYKLVTGKEPTRRFSTIVVEEGHEGLTHFLMNEVIKLQQQMKAKDLQRCELLARLRQLEDEKKQMTLTRVELLTFQERYYKMKEERDSYNDELVKVKDDNYNLAMRYAQLSEEKNMAVMRSRDLQLEIDQLKHRLNKMEEECKLERNQSLKLKNDIENRPKKEQVLELERENEMLKTKNQELQSIIQAGKRSLPDSDKAILDILEHDRKEALEDRQELVNRIYNLQEEARQAEELRDKYLEEKEDLELKCSTLGKDCEMYKHRMNTVMLQLEEVERERDQAFHSRDEAQTQYSQCLIEKDKYRKQIRELEEKNDEMRIEMVRREACIVNLESKLRRLSKDSNNLDQSLPRNLPVTIISQDFGDASPRTNGQEADDSSTSEESPEDSKYFLPYHPPQRRMNLKGIQLQRAKSPISLKRTSDFQAKGHEEEGTDASPSSCGSLPITNSFTKMQPPRSRSSIMSITAEPPGNDSIVRRYKEDAPHRSTVEEDNDSGGFDALDLDDDSHERYSFGPSSIHSSSSSHQSEGLDAYDLEQVNLMFRKFSLERPFRPSVTSVGHVRGPGPSVQHTTLNGDSLTSQLTLLGGNARGSFVHSVKPGSLAEKAGLREGHQLLLLEGCIRGERQSVPLDTCTKEEAHWTIQRCSGPVTLHYKVNHEGYRKLVKDMEDGLITSGDSFYIRLNLNISSQLDACTMSLKCDDVVHVRDTMYQDRHEWLCARVDPFTDHDLDMGTIPSYSRAQQLLLVKLQRLMHRGSREEVDGTHHTLRALRNTLQPEEALSTSDPRVSPRLSRASFLFGQLLQFVSRSENKYKRMNSNERVRIISGSPLGSLARSSLDATKLLTEKQEELDPESELGKNLSLIPYSLVRAFYCERRRPVLFTPTVLAKTLVQRLLNSGGAMEFTICKSDIVTRDEFLRRQKTETIIYSREKNPNAFECIAPANIEAVAAKNKHCLLEAGIGCTRDLIKSNIYPIVLFIRVCEKNIKRFRKLLPRPETEEEFLRVCRLKEKELEALPCLYATVEPDMWGSVEELLRVVKDKIGEEQRKTIWVDEDQL.

The 93-residue stretch at 18-110 folds into the CARD domain; sequence EEDALWENVE…ELYKLVTGKE (93 aa). The interval 111-128 is linker; that stretch reads PTRRFSTIVVEEGHEGLT. Residues 130–449 are a coiled coil; it reads FLMNEVIKLQ…KDSNNLDQSL (320 aa). Phosphoserine is present on residues Ser-448 and Ser-466. The tract at residues 450-666 is inhibitory domain (ID); sequence PRNLPVTIIS…GHVRGPGPSV (217 aa). The tract at residues 460–626 is disordered; sequence QDFGDASPRT…HSSSSSHQSE (167 aa). Residues 473-484 show a composition bias toward acidic residues; it reads EADDSSTSEESP. Ser-512 is modified (phosphoserine). The segment covering 518–529 has biased composition (basic and acidic residues); it reads RTSDFQAKGHEE. Polar residues predominate over residues 534 to 562; it reads ASPSSCGSLPITNSFTKMQPPRSRSSIMS. Ser-535 carries the phosphoserine modification. Phosphoserine; by PKC/PRKCB and PKC/PRKCQ is present on Ser-559. Basic and acidic residues predominate over residues 573 to 587; it reads IVRRYKEDAPHRSTV. Residue Ser-593 is modified to Phosphoserine. Positions 614–625 are enriched in low complexity; the sequence is SSIHSSSSSHQS. Phosphoserine; by PKC/PRKCB and PKC/PRKCQ occurs at positions 644 and 652. Residues 667–755 enclose the PDZ domain; sequence QHTTLNGDSL…PVTLHYKVNH (89 aa). 2 positions are modified to phosphoserine: Ser-886 and Ser-925. Residues 973 to 1140 form the Guanylate kinase-like domain; the sequence is RRRPVLFTPT…LLRVVKDKIG (168 aa).

Homodimer; disulfide-linked. Homomultimer; polymerizes following activation, forming a nucleating helical template that seeds BCL10-filament formation via a CARD-CARD interaction. Interacts (via CARD domain) with BCL10 (via CARD domain); interaction takes place following CARD11 activation and polymerization, leading to the formation of a filamentous CBM complex assembly. Component of a CBM complex (CARD11-BCL10-MALT1) complex involved in NF-kappa-B activation. Found in a membrane raft complex, at least composed of BCL10, CARD11, DPP4 and IKBKB. Interacts (via PDZ domain) with DPP4 (via cytoplasmic tail). Phosphorylation at Ser-559, Ser-644 and Ser-652 by PRKCB and PRKCQ leads to a shift from an inactive to an active form that activates the NF-kappa-B signaling. In terms of tissue distribution, detected in adult peripheral blood leukocytes, thymus, spleen and liver. Also found in promyelocytic leukemia HL-60 cells, chronic myelogenous leukemia K-562 cells, Burkitt's lymphoma Raji cells and colorectal adenocarcinoma SW480 cells. Not detected in HeLaS3, MOLT-4, A-549 and G431 cells.

The protein localises to the cytoplasm. Its subcellular location is the membrane raft. Its activity is regulated as follows. Maintained in an autoinhibited state via homodimerization in which the CARD domain forms an extensive interaction with the adjacent linker and coiled-coil regions. Activation downstream of T-cell receptor (TCR) by phosphorylation by PRKCB and PRKCQ triggers CARD11 homooligomerization and BCL10 recruitment, followed by activation of NF-kappa-B. Its function is as follows. Adapter protein that plays a key role in adaptive immune response by transducing the activation of NF-kappa-B downstream of T-cell receptor (TCR) and B-cell receptor (BCR) engagement. Transduces signals downstream TCR or BCR activation via the formation of a multiprotein complex together with BCL10 and MALT1 that induces NF-kappa-B and MAP kinase p38 (MAPK11, MAPK12, MAPK13 and/or MAPK14) pathways. Upon activation in response to TCR or BCR triggering, CARD11 homooligomerizes to form a nucleating helical template that recruits BCL10 via CARD-CARD interaction, thereby promoting polymerization of BCL10 and subsequent recruitment of MALT1: this leads to I-kappa-B kinase (IKK) phosphorylation and degradation, and release of NF-kappa-B proteins for nuclear translocation. Its binding to DPP4 induces T-cell proliferation and NF-kappa-B activation in a T-cell receptor/CD3-dependent manner. Promotes linear ubiquitination of BCL10 by promoting the targeting of BCL10 to RNF31/HOIP. Stimulates the phosphorylation of BCL10. Also activates the TORC1 signaling pathway. The polypeptide is Caspase recruitment domain-containing protein 11 (Homo sapiens (Human)).